Reading from the N-terminus, the 257-residue chain is Probable enoyl-CoA hydratase (257 aa).

Belongs to the enoyl-CoA hydratase/isomerase family.

The enzyme catalyses a (3S)-3-hydroxyacyl-CoA = a (2E)-enoyl-CoA + H2O. It carries out the reaction a 4-saturated-(3S)-3-hydroxyacyl-CoA = a (3E)-enoyl-CoA + H2O. In terms of biological role, could possibly oxidize fatty acids using specific components. This is Probable enoyl-CoA hydratase (fadB1) from Rhizobium meliloti (strain 1021) (Ensifer meliloti).